The chain runs to 227 residues: ATP-dependent dethiobiotin synthetase BioD (227 aa).

Residue 13 to 18 (DIGKTY) participates in ATP binding. T17 lines the Mg(2+) pocket. The active site involves K38. S42 is a binding site for substrate. ATP is bound by residues D55, 116–119 (EGSG), and 179–180 (NN). Mg(2+) is bound by residues D55 and E116.

Belongs to the dethiobiotin synthetase family. In terms of assembly, homodimer. It depends on Mg(2+) as a cofactor.

The protein localises to the cytoplasm. The catalysed reaction is (7R,8S)-7,8-diammoniononanoate + CO2 + ATP = (4R,5S)-dethiobiotin + ADP + phosphate + 3 H(+). It functions in the pathway cofactor biosynthesis; biotin biosynthesis; biotin from 7,8-diaminononanoate: step 1/2. In terms of biological role, catalyzes a mechanistically unusual reaction, the ATP-dependent insertion of CO2 between the N7 and N8 nitrogen atoms of 7,8-diaminopelargonic acid (DAPA, also called 7,8-diammoniononanoate) to form a ureido ring. In Clostridium botulinum (strain ATCC 19397 / Type A), this protein is ATP-dependent dethiobiotin synthetase BioD.